Consider the following 275-residue polypeptide: 2,3,4,5-tetrahydropyridine-2,6-dicarboxylate N-succinyltransferase (275 aa).

2 residues coordinate substrate: R106 and D143.

This sequence belongs to the transferase hexapeptide repeat family. Homotrimer.

It localises to the cytoplasm. The catalysed reaction is (S)-2,3,4,5-tetrahydrodipicolinate + succinyl-CoA + H2O = (S)-2-succinylamino-6-oxoheptanedioate + CoA. It participates in amino-acid biosynthesis; L-lysine biosynthesis via DAP pathway; LL-2,6-diaminopimelate from (S)-tetrahydrodipicolinate (succinylase route): step 1/3. The polypeptide is 2,3,4,5-tetrahydropyridine-2,6-dicarboxylate N-succinyltransferase (Paraburkholderia xenovorans (strain LB400)).